Reading from the N-terminus, the 383-residue chain is UDP-D-xylose:L-fucose alpha-1,3-D-xylosyltransferase 3 (383 aa).

The Cytoplasmic segment spans residues 1 to 20 (MAQQSQRPISNRHISLLNRN). Residues 21-41 (GLILLLLLALFVILGVFLPLT) traverse the membrane as a helical; Signal-anchor for type II membrane protein segment. Residues 42–383 (KSSLFMFPNT…KNRGKKHKLP (342 aa)) are Lumenal-facing. N-linked (GlcNAc...) asparagine glycosylation is found at N50, N82, and N157. The DXD motif signature appears at 180–182 (DVD). N212, N258, N301, N306, N357, and N364 each carry an N-linked (GlcNAc...) asparagine glycan.

Belongs to the glycosyltransferase 77 family. Mn(2+) serves as cofactor. Mg(2+) is required as a cofactor. Post-translationally, glycosylated. In terms of tissue distribution, expressed around trichome support cells in the adaxial epidermis of rosette leaves, in cauline leaves, petals and both the proximal and distal ends of siliques.

Its subcellular location is the golgi apparatus membrane. In terms of biological role, catalyzes the transfer of D-xylose from UDP-alpha-D-xylose onto L-fucose. Probably involved in the biosynthesis of rhamnogalacturonan II (RG-II) through xylosylation of the internal fucose moiety of the A-chain of RG-II, a structurally complex pectic polysaccharide of the primary cell wall. RG-II is essential for the cell wall integrity of rapidly growing tissues such as roots and pollen tube growth and elongation. This Arabidopsis thaliana (Mouse-ear cress) protein is UDP-D-xylose:L-fucose alpha-1,3-D-xylosyltransferase 3.